We begin with the raw amino-acid sequence, 145 residues long: uncharacterized protein (145 aa).

The segment at Gly-71 to Gly-95 is disordered.

This is an uncharacterized protein from Homo sapiens (Human).